The chain runs to 326 residues: Protein FAM50 homolog (326 aa).

The disordered stretch occupies residues 76-112 (EISNRDLQVARGASSSTSLAKDSQEAREKEEHVAKHT). Residues 97 to 109 (DSQEAREKEEHVA) are compositionally biased toward basic and acidic residues.

It belongs to the FAM50 family.

The protein is Protein FAM50 homolog of Caenorhabditis briggsae.